A 286-amino-acid polypeptide reads, in one-letter code: Pantothenate synthetase (286 aa).

Position 30 to 37 (30 to 37) interacts with ATP; it reads MGNLHAGH. His37 acts as the Proton donor in catalysis. Gln61 is a binding site for (R)-pantoate. Residue Gln61 coordinates beta-alanine. 149–152 serves as a coordination point for ATP; sequence GEKD. (R)-pantoate is bound at residue Gln155. ATP is bound by residues Val178 and 186 to 189; that span reads MSSR.

The protein belongs to the pantothenate synthetase family. In terms of assembly, homodimer.

It is found in the cytoplasm. It catalyses the reaction (R)-pantoate + beta-alanine + ATP = (R)-pantothenate + AMP + diphosphate + H(+). It functions in the pathway cofactor biosynthesis; (R)-pantothenate biosynthesis; (R)-pantothenate from (R)-pantoate and beta-alanine: step 1/1. Its function is as follows. Catalyzes the condensation of pantoate with beta-alanine in an ATP-dependent reaction via a pantoyl-adenylate intermediate. In Methylococcus capsulatus (strain ATCC 33009 / NCIMB 11132 / Bath), this protein is Pantothenate synthetase.